The sequence spans 308 residues: D-alanine--D-alanine ligase B (308 aa).

The 201-residue stretch at 102–302 folds into the ATP-grasp domain; that stretch reads KKVAAAAGVV…FAELLSWMVE (201 aa). Residue 128-183 participates in ATP binding; the sequence is PMKPPYVVKPVREGSSFGVVIVKEDQPHPPQVIGSADWKYGDEVMVEGYIAGRELT. Mg(2+) is bound by residues Asp-252, Glu-269, and Asn-271.

It belongs to the D-alanine--D-alanine ligase family. Mg(2+) is required as a cofactor. Requires Mn(2+) as cofactor.

It localises to the cytoplasm. The catalysed reaction is 2 D-alanine + ATP = D-alanyl-D-alanine + ADP + phosphate + H(+). Its pathway is cell wall biogenesis; peptidoglycan biosynthesis. In terms of biological role, cell wall formation. The polypeptide is D-alanine--D-alanine ligase B (Brucella suis biovar 1 (strain 1330)).